Consider the following 65-residue polypeptide: Cold shock-like protein CspC (65 aa).

In terms of domain architecture, CSD spans 3–62; the sequence is GRVKWFNAEKGFGFIEREDGDDVFVHFSAIQQDGYKSLEEGQQVEFDIVDGARGPQAANV.

As to quaternary structure, homodimer.

The protein localises to the cytoplasm. The sequence is that of Cold shock-like protein CspC (cspC) from Bacillus cereus.